The sequence spans 263 residues: Cytochrome c oxidase subunit 3 (263 aa).

A run of 7 helical transmembrane segments spans residues 9-29, 40-60, 84-104, 129-149, 161-181, 198-218, and 241-261; these read PFHM…AMIL, FNMN…IQWW, GMIL…WAFF, IQIP…ITWA, ALQG…LQMY, TFFV…TFLL, and AWYW…IYWW.

This sequence belongs to the cytochrome c oxidase subunit 3 family. Component of the cytochrome c oxidase (complex IV, CIV), a multisubunit enzyme composed of a catalytic core of 3 subunits and several supernumerary subunits. The complex exists as a monomer or a dimer and forms supercomplexes (SCs) in the inner mitochondrial membrane with ubiquinol-cytochrome c oxidoreductase (cytochrome b-c1 complex, complex III, CIII).

It is found in the mitochondrion inner membrane. It catalyses the reaction 4 Fe(II)-[cytochrome c] + O2 + 8 H(+)(in) = 4 Fe(III)-[cytochrome c] + 2 H2O + 4 H(+)(out). Component of the cytochrome c oxidase, the last enzyme in the mitochondrial electron transport chain which drives oxidative phosphorylation. The respiratory chain contains 3 multisubunit complexes succinate dehydrogenase (complex II, CII), ubiquinol-cytochrome c oxidoreductase (cytochrome b-c1 complex, complex III, CIII) and cytochrome c oxidase (complex IV, CIV), that cooperate to transfer electrons derived from NADH and succinate to molecular oxygen, creating an electrochemical gradient over the inner membrane that drives transmembrane transport and the ATP synthase. Cytochrome c oxidase is the component of the respiratory chain that catalyzes the reduction of oxygen to water. Electrons originating from reduced cytochrome c in the intermembrane space (IMS) are transferred via the dinuclear copper A center (CU(A)) of subunit 2 and heme A of subunit 1 to the active site in subunit 1, a binuclear center (BNC) formed by heme A3 and copper B (CU(B)). The BNC reduces molecular oxygen to 2 water molecules using 4 electrons from cytochrome c in the IMS and 4 protons from the mitochondrial matrix. In Locusta migratoria (Migratory locust), this protein is Cytochrome c oxidase subunit 3 (COIII).